Reading from the N-terminus, the 346-residue chain is MSELKQKQIFSEKALEKEQQSDSPELTAQKTFSEKETFVPVKIEEDRIETEQELQLEHVIRPRPGRKWLATSVFATFAGLVGWQAVDSVVTAVQTADWLALGWVGFITAVASLGLGAIGKELWKLRKLRNHFSIQEEAELLVHSDSVGKGKVFCEKVAEESGVLAENPGFDRWQNSINPAHSDAEILDMYDSMVVSQQDKLATKVVSQHATESAALVAVSPLAAADMLLVAWRNFKMIDNLSKVYGVELGYASRIKLLRAVFVNMAAAGASELAIDAGMDLMSMDLAGKVSARAGQGLGVGILTARLGLKAMALLRPLPWYPDRQVKLGTIRKAVVAKVASITMKP.

The disordered stretch occupies residues 1–30; the sequence is MSELKQKQIFSEKALEKEQQSDSPELTAQK. Residues 21-30 show a composition bias toward polar residues; the sequence is SDSPELTAQK. A run of 2 helical transmembrane segments spans residues 73-93 and 98-118; these read VFAT…VTAV and WLAL…LGAI.

This sequence belongs to the UPF0283 family.

Its subcellular location is the cell inner membrane. In Vibrio parahaemolyticus serotype O3:K6 (strain RIMD 2210633), this protein is UPF0283 membrane protein VP1870.